A 413-amino-acid polypeptide reads, in one-letter code: Tyrosine--tRNA ligase (413 aa).

Positions 55–64 match the 'HIGH' region motif; the sequence is PTRPDLHLGH. The short motif at 242-246 is the 'KMSKS' region element; it reads KMSKS. Lys245 serves as a coordination point for ATP. An S4 RNA-binding domain is found at 346 to 410; the sequence is VKLSYILREC…GKKAFRRLVK (65 aa).

It belongs to the class-I aminoacyl-tRNA synthetase family. TyrS type 2 subfamily. In terms of assembly, homodimer.

It localises to the cytoplasm. The catalysed reaction is tRNA(Tyr) + L-tyrosine + ATP = L-tyrosyl-tRNA(Tyr) + AMP + diphosphate + H(+). Its function is as follows. Catalyzes the attachment of tyrosine to tRNA(Tyr) in a two-step reaction: tyrosine is first activated by ATP to form Tyr-AMP and then transferred to the acceptor end of tRNA(Tyr). In Synechococcus sp. (strain JA-2-3B'a(2-13)) (Cyanobacteria bacterium Yellowstone B-Prime), this protein is Tyrosine--tRNA ligase.